We begin with the raw amino-acid sequence, 245 residues long: Flavin mononucleotide hydrolase 1, chloroplatic (245 aa).

The transit peptide at 1 to 26 (MAAAAMHTSAEFINLKPNMWKKNPVR) directs the protein to the chloroplast.

The protein belongs to the HAD-like hydrolase superfamily. DOG/GPP family. Homodimer. Mg(2+) serves as cofactor.

The protein resides in the plastid. Its subcellular location is the chloroplast stroma. It carries out the reaction FMN + H2O = riboflavin + phosphate. The catalysed reaction is 5-amino-6-(5-phospho-D-ribitylamino)uracil + H2O = 5-amino-6-(D-ribitylamino)uracil + phosphate. FMN hydrolase that catalyzes the dephosphorylation of flavin mononucleotide (FMN) to riboflavin. Can also dephosphorylate 5-amino-6-(5-phospho-D-ribitylamino)uracil, also known as ARPP. Not required for riboflavin biosynthesis in planta, but may help maintaining flavin homeostasis within chloroplasts. The polypeptide is Flavin mononucleotide hydrolase 1, chloroplatic (Arabidopsis thaliana (Mouse-ear cress)).